Here is a 756-residue protein sequence, read N- to C-terminus: Inhibitor of nuclear factor kappa-B kinase subunit beta (756 aa).

The region spanning 15–300 (WEMKERLGTG…DPVYGPNGCF (286 aa)) is the Protein kinase domain. Residues 21–29 (LGTGGFGNV) and Lys44 each bind ATP. The active-site Proton acceptor is the Asp145. A Glycyl lysine isopeptide (Lys-Gly) (interchain with G-Cter in ubiquitin) cross-link involves residue Lys163. Ser177 is modified (phosphoserine; by TBK1 and PKC/PRKCZ). Cys179 carries the S-nitrosocysteine modification. Ser181 is subject to Phosphoserine; by TBK1, PKC/PRKCZ and PDPK1. Residue Pro191 is modified to Hydroxyproline. The segment at 458 to 479 (LLRNNSCLSKMKNSMASMSQQL) is leucine-zipper. Residues Ser670, Ser672, Ser675, Ser682, Ser689, Ser697, Ser705, Ser733, and Ser740 each carry the phosphoserine; by autocatalysis modification. The NEMO-binding stretch occupies residues 737–742 (LDWSWL).

The protein belongs to the protein kinase superfamily. Ser/Thr protein kinase family. I-kappa-B kinase subfamily. Component of the I-kappa-B-kinase (IKK) core complex consisting of CHUK, IKBKB and IKBKG; probably four alpha/CHUK-beta/IKBKB dimers are associated with four gamma/IKBKG subunits. The IKK core complex seems to associate with regulatory or adapter proteins to form a IKK-signalosome holo-complex. The IKK complex associates with TERF2IP/RAP1, leading to promote IKK-mediated phosphorylation of RELA/p65. Part of a complex composed of NCOA2, NCOA3, CHUK/IKKA, IKBKB, IKBKG and CREBBP. Part of a 70-90 kDa complex at least consisting of CHUK/IKKA, IKBKB, NFKBIA, RELA, ELP1 and MAP3K14. Found in a membrane raft complex, at least composed of BCL10, CARD11, DPP4 and IKBKB. Interacts with SQSTM1 through PRKCZ or PRKCI. Forms an NGF-induced complex with IKBKB, PRKCI and TRAF6. May interact with MAVS/IPS1. Interacts with NALP2. Interacts with TICAM1. Interacts with FAF1; the interaction disrupts the IKK complex formation. Interacts with ATM. Part of a ternary complex consisting of TANK, IKBKB and IKBKG. Interacts with NIBP; the interaction is direct. Interacts with ARRB1 and ARRB2. Interacts with TRIM21. Interacts with NLRC5; prevents IKBKB phosphorylation and kinase activity. Interacts with PDPK1. Interacts with EIF2AK2/PKR. The phosphorylated form interacts with PPM1A and PPM1B. Interacts with ZNF268; the interaction is further increased in a TNF-alpha-dependent manner. Interacts with IKBKE. Interacts with ZC3H12A. Interacts with AKAP13. Interacts with IFIT5; the interaction synergizes the recruitment of IKK to MAP3K7 and enhances IKK phosphorylation. Interacts with LRRC14; disrupts IKBKB-IKBKG interaction preventing I-kappa-B-kinase (IKK) core complex formation and leading to a decrease of IKBKB phosphorylation and NF-kappaB activation. Interacts with SASH1. Interacts with ARFIP2. Interacts with FKBP5. Post-translationally, upon cytokine stimulation, phosphorylated on Ser-177 and Ser-181 by MEKK1 and/or MAP3K14/NIK as well as TBK1 and PRKCZ; which enhances activity. Phosphorylated by MAP3K7/TAK1 in response to NOD1 and NOD2 signaling, promoting activation and phosphorylation of NF-kappa-B inhibitors, leading to NF-kappa-B activation. Once activated, autophosphorylates on the C-terminal serine cluster; which decreases activity and prevents prolonged activation of the inflammatory response. Phosphorylated by the IKK-related kinases TBK1 and IKBKE, which is associated with reduced CHUK/IKKA and IKBKB activity and NF-kappa-B-dependent gene transcription. Dephosphorylated at Ser-177 and Ser-181 by PPM1A and PPM1B. In terms of processing, ubiquitinated. Monoubiquitination involves TRIM21 that leads to inhibition of Tax-induced NF-kappa-B signaling. 'Ser-163' may not serve as a monoubiquitination site. Ubiquitination on 'Ser-163' may modulate phosphorylation on C-terminal serine residues. Hydroxylated by PHD1/EGLN2, loss of hydroxylation under hypoxic conditions results in activation of NF-kappa-B.

The protein localises to the cytoplasm. It is found in the nucleus. The protein resides in the membrane raft. The enzyme catalyses L-seryl-[I-kappa-B protein] + ATP = O-phospho-L-seryl-[I-kappa-B protein] + ADP + H(+). The catalysed reaction is L-seryl-[protein] + ATP = O-phospho-L-seryl-[protein] + ADP + H(+). It catalyses the reaction L-threonyl-[protein] + ATP = O-phospho-L-threonyl-[protein] + ADP + H(+). Functionally, serine kinase that plays an essential role in the NF-kappa-B signaling pathway which is activated by multiple stimuli such as inflammatory cytokines, bacterial or viral products, DNA damages or other cellular stresses. Acts as a part of the canonical IKK complex in the conventional pathway of NF-kappa-B activation. Phosphorylates inhibitors of NF-kappa-B on 2 critical serine residues. These modifications allow polyubiquitination of the inhibitors and subsequent degradation by the proteasome. In turn, free NF-kappa-B is translocated into the nucleus and activates the transcription of hundreds of genes involved in immune response, growth control, or protection against apoptosis. In addition to the NF-kappa-B inhibitors, phosphorylates several other components of the signaling pathway including NEMO/IKBKG, NF-kappa-B subunits RELA and NFKB1, as well as IKK-related kinases TBK1 and IKBKE. IKK-related kinase phosphorylations may prevent the overproduction of inflammatory mediators since they exert a negative regulation on canonical IKKs. Phosphorylates FOXO3, mediating the TNF-dependent inactivation of this pro-apoptotic transcription factor. Also phosphorylates other substrates including NAA10, NCOA3, BCL10 and IRS1. Phosphorylates RIPK1 at 'Ser-25' which represses its kinase activity and consequently prevents TNF-mediated RIPK1-dependent cell death. Phosphorylates the C-terminus of IRF5, stimulating IRF5 homodimerization and translocation into the nucleus. This chain is Inhibitor of nuclear factor kappa-B kinase subunit beta (IKBKB), found in Bos taurus (Bovine).